A 448-amino-acid polypeptide reads, in one-letter code: tRNA modification GTPase MnmE (448 aa).

(6S)-5-formyl-5,6,7,8-tetrahydrofolate is bound by residues Arg-22, Glu-79, and Lys-118. A TrmE-type G domain is found at 214 to 371 (GLHVVLAGQP…LRQELLRIAG (158 aa)). Asn-224 serves as a coordination point for K(+). Residues 224 to 229 (NVGKSS), 243 to 249 (TPIAGTT), and 268 to 271 (DTAG) contribute to the GTP site. Mg(2+) is bound at residue Ser-228. K(+)-binding residues include Thr-243, Ile-245, and Thr-248. Residue Thr-249 participates in Mg(2+) binding. Lys-448 serves as a coordination point for (6S)-5-formyl-5,6,7,8-tetrahydrofolate.

The protein belongs to the TRAFAC class TrmE-Era-EngA-EngB-Septin-like GTPase superfamily. TrmE GTPase family. Homodimer. Heterotetramer of two MnmE and two MnmG subunits. Requires K(+) as cofactor.

Its subcellular location is the cytoplasm. Functionally, exhibits a very high intrinsic GTPase hydrolysis rate. Involved in the addition of a carboxymethylaminomethyl (cmnm) group at the wobble position (U34) of certain tRNAs, forming tRNA-cmnm(5)s(2)U34. The sequence is that of tRNA modification GTPase MnmE from Dechloromonas aromatica (strain RCB).